The following is a 270-amino-acid chain: Phosphatidylglycerol--prolipoprotein diacylglyceryl transferase (270 aa).

The next 4 membrane-spanning stretches (helical) occupy residues F19–A39, L56–E76, Q92–A112, and G116–I136. R138 provides a ligand contact to a 1,2-diacyl-sn-glycero-3-phospho-(1'-sn-glycerol). 3 helical membrane passes run H178–L198, G206–L226, and L236–V256.

This sequence belongs to the Lgt family.

It localises to the cell membrane. The enzyme catalyses L-cysteinyl-[prolipoprotein] + a 1,2-diacyl-sn-glycero-3-phospho-(1'-sn-glycerol) = an S-1,2-diacyl-sn-glyceryl-L-cysteinyl-[prolipoprotein] + sn-glycerol 1-phosphate + H(+). The protein operates within protein modification; lipoprotein biosynthesis (diacylglyceryl transfer). In terms of biological role, catalyzes the transfer of the diacylglyceryl group from phosphatidylglycerol to the sulfhydryl group of the N-terminal cysteine of a prolipoprotein, the first step in the formation of mature lipoproteins. This chain is Phosphatidylglycerol--prolipoprotein diacylglyceryl transferase, found in Bacillus cereus (strain ATCC 14579 / DSM 31 / CCUG 7414 / JCM 2152 / NBRC 15305 / NCIMB 9373 / NCTC 2599 / NRRL B-3711).